We begin with the raw amino-acid sequence, 73 residues long: UPF0435 protein OB1527 (73 aa).

This sequence belongs to the UPF0435 family.

The protein is UPF0435 protein OB1527 of Oceanobacillus iheyensis (strain DSM 14371 / CIP 107618 / JCM 11309 / KCTC 3954 / HTE831).